A 291-amino-acid polypeptide reads, in one-letter code: ATP synthase gamma chain 2 (291 aa).

Residues 187 to 208 are disordered; sequence LLPHPDKDESQDSKPNDATSRW. Residues 190 to 201 show a composition bias toward basic and acidic residues; the sequence is HPDKDESQDSKP.

This sequence belongs to the ATPase gamma chain family. As to quaternary structure, F-type ATPases have 2 components, CF(1) - the catalytic core - and CF(0) - the membrane proton channel. CF(1) has five subunits: alpha(3), beta(3), gamma(1), delta(1), epsilon(1). CF(0) has three main subunits: a, b and c.

It is found in the cell inner membrane. Its function is as follows. Produces ATP from ADP in the presence of a proton gradient across the membrane. The gamma chain is believed to be important in regulating ATPase activity and the flow of protons through the CF(0) complex. The sequence is that of ATP synthase gamma chain 2 from Photobacterium profundum (strain SS9).